A 130-amino-acid chain; its full sequence is Small ribosomal subunit protein uS9 (130 aa).

This sequence belongs to the universal ribosomal protein uS9 family.

In Burkholderia mallei (strain NCTC 10247), this protein is Small ribosomal subunit protein uS9.